The sequence spans 290 residues: Probable 2-(5''-triphosphoribosyl)-3'-dephosphocoenzyme-A synthase (290 aa).

Belongs to the CitG/MdcB family.

It catalyses the reaction 3'-dephospho-CoA + ATP = 2'-(5''-triphospho-alpha-D-ribosyl)-3'-dephospho-CoA + adenine. Its function is as follows. Involved in the formation of 2-(5''-phosphoribosyl)-3'-dephosphocoenzyme-A, the prosthetic group of the acyl-carrier protein of the malonate decarboxylase. The sequence is that of Probable 2-(5''-triphosphoribosyl)-3'-dephosphocoenzyme-A synthase from Pseudomonas fluorescens (strain Pf0-1).